The sequence spans 308 residues: Probable GTP 3',8-cyclase (308 aa).

The Radical SAM core domain occupies 4–224 (RFGRPLEDLR…QIRKKHFRPR (221 aa)). Arginine 13 lines the GTP pocket. Positions 20, 24, and 27 each coordinate [4Fe-4S] cluster. A GTP-binding site is contributed by lysine 60. Residue glycine 64 coordinates S-adenosyl-L-methionine. Threonine 90 provides a ligand contact to GTP. S-adenosyl-L-methionine is bound at residue serine 114. Residue lysine 151 participates in GTP binding. [4Fe-4S] cluster contacts are provided by cysteine 245 and cysteine 248. A GTP-binding site is contributed by 250–252 (RIR). Cysteine 262 contributes to the [4Fe-4S] cluster binding site.

The protein belongs to the radical SAM superfamily. MoaA family. Requires [4Fe-4S] cluster as cofactor.

It carries out the reaction GTP + AH2 + S-adenosyl-L-methionine = (8S)-3',8-cyclo-7,8-dihydroguanosine 5'-triphosphate + 5'-deoxyadenosine + L-methionine + A + H(+). It functions in the pathway cofactor biosynthesis; molybdopterin biosynthesis. Catalyzes the cyclization of GTP to (8S)-3',8-cyclo-7,8-dihydroguanosine 5'-triphosphate. This is Probable GTP 3',8-cyclase from Saccharolobus islandicus (strain M.16.27) (Sulfolobus islandicus).